Here is a 283-residue protein sequence, read N- to C-terminus: MATRLDGRAVSKKILADLKQTIAELAQHDVTPTLAVVLVGSNPASEVYVRNKQRRAEDIGVRSLMFRMPEATTQADLLAKVAELNHDPDIDAILVQLPLPAGLDEQAVIDAIDPDKDVDGFSPVSVGRLWANEPTVVASTPYGIMALLDAYDIDVAGKRVVIIGRSNIVGRPLAGLMVNHDATVTIAHSKTRDLKQLAKEADILVVAVGVPHFIGADAVKPGAVVIDVGISRGADGKLLGDVDEAAVAPIASAITPVPGGVGPMTIASLMAQTVTLAKRRANG.

NADP(+)-binding positions include 164–166 (GRS), S189, and I230.

This sequence belongs to the tetrahydrofolate dehydrogenase/cyclohydrolase family. As to quaternary structure, homodimer.

The enzyme catalyses (6R)-5,10-methylene-5,6,7,8-tetrahydrofolate + NADP(+) = (6R)-5,10-methenyltetrahydrofolate + NADPH. It catalyses the reaction (6R)-5,10-methenyltetrahydrofolate + H2O = (6R)-10-formyltetrahydrofolate + H(+). The protein operates within one-carbon metabolism; tetrahydrofolate interconversion. Catalyzes the oxidation of 5,10-methylenetetrahydrofolate to 5,10-methenyltetrahydrofolate and then the hydrolysis of 5,10-methenyltetrahydrofolate to 10-formyltetrahydrofolate. The polypeptide is Bifunctional protein FolD (Lacticaseibacillus casei (strain BL23) (Lactobacillus casei)).